Consider the following 219-residue polypeptide: RNA-free ribonuclease P (219 aa).

The protein belongs to the HARP family.

It catalyses the reaction Endonucleolytic cleavage of RNA, removing 5'-extranucleotides from tRNA precursor.. Functionally, RNA-free RNase P that catalyzes the removal of the 5'-leader sequence from pre-tRNA to produce the mature 5'-terminus. This chain is RNA-free ribonuclease P, found in Staphylothermus marinus (strain ATCC 43588 / DSM 3639 / JCM 9404 / F1).